A 406-amino-acid polypeptide reads, in one-letter code: NADH-quinone oxidoreductase subunit D (406 aa).

It belongs to the complex I 49 kDa subunit family. NDH-1 is composed of 14 different subunits. Subunits NuoB, C, D, E, F, and G constitute the peripheral sector of the complex.

Its subcellular location is the cell inner membrane. The enzyme catalyses a quinone + NADH + 5 H(+)(in) = a quinol + NAD(+) + 4 H(+)(out). In terms of biological role, NDH-1 shuttles electrons from NADH, via FMN and iron-sulfur (Fe-S) centers, to quinones in the respiratory chain. The immediate electron acceptor for the enzyme in this species is believed to be ubiquinone. Couples the redox reaction to proton translocation (for every two electrons transferred, four hydrogen ions are translocated across the cytoplasmic membrane), and thus conserves the redox energy in a proton gradient. The chain is NADH-quinone oxidoreductase subunit D from Rhizorhabdus wittichii (strain DSM 6014 / CCUG 31198 / JCM 15750 / NBRC 105917 / EY 4224 / RW1) (Sphingomonas wittichii).